Here is a 585-residue protein sequence, read N- to C-terminus: FAD-linked oxidoreductase apf9 (585 aa).

The first 19 residues, Met1–Ala19, serve as a signal peptide directing secretion. 3 N-linked (GlcNAc...) asparagine glycosylation sites follow: Asn40, Asn92, and Asn117. The FAD-binding PCMH-type domain maps to Ile108 to Thr294. His145 carries the pros-8alpha-FAD histidine modification. N-linked (GlcNAc...) asparagine glycosylation is found at Asn352, Asn412, and Asn495.

It belongs to the oxygen-dependent FAD-linked oxidoreductase family. Requires FAD as cofactor.

Its pathway is secondary metabolite biosynthesis. Its function is as follows. FAD-linked oxidoreductase; part of the gene cluster that mediates the biosynthesis of the cyclic tetrapeptide apicidin F (APF). The non-ribosomal peptide synthetase apf1 incorporates four different amino acids to produce apicidin F: L-phenylalanine, D-pipecolic acid (D-pip), N-methoxy-L-tryptophan and L-2-aminooctanedioic acid. L-Phenylalanine is the only proteinogenic amino acid directly used by apf1. The 3 other apf1 substrates are non-proteinogenic and have to be modified by other enzymes of the cluster. Lysine is converted to delta-1-pyrroline-5-carboxylate (P5C) which is reduced to L-pipecolic acid (L-pip) by apf3. L-pip is epimerized to D-pip, probably by apf1 activity, prior to incorporation. L-Tryptophan is N-oxidyzed by one of the cytochrome P450 monooxygenases (apf7 or apf8), and further methylated at the hydroxy group by the O-methyltransferase apf6 to yield N-methoxy-L-tryptophan. The synthesis of the fourth apf1 substrate is more complex. The fatty acid synthase apf5 is involved in the synthesis of the octanoic acid backbone of L-2-aminooctanedioic acid by fixing one acetyl-CoA unit and three malonyl-CoA units. Then one of the cytochrome P450 monooxygenases (apf7 or apf8) may oxidize this backbone to 2-oxooctanoic acid. The aminotransferase apf4 is predicted to catalyze the exchange of the keto group with an amino group. The next step would be the oxidation of 2-aminooctanoic acid by one of the cytochrome P450 monooxygenases (apf7 or apf8). The last step is the oxidation of 2-amino-8-hydroxyoctanoic acid to 2-aminooctanedioic acid is catalyzed by the FAD-dependent monooxygenase apf9. This is FAD-linked oxidoreductase apf9 from Gibberella fujikuroi (strain CBS 195.34 / IMI 58289 / NRRL A-6831) (Bakanae and foot rot disease fungus).